Consider the following 436-residue polypeptide: Trigger factor (436 aa).

One can recognise a PPIase FKBP-type domain in the interval 163-248 (GDTVNIDFDG…VNEIKYKDVP (86 aa)).

The protein belongs to the FKBP-type PPIase family. Tig subfamily.

The protein resides in the cytoplasm. The enzyme catalyses [protein]-peptidylproline (omega=180) = [protein]-peptidylproline (omega=0). In terms of biological role, involved in protein export. Acts as a chaperone by maintaining the newly synthesized protein in an open conformation. Functions as a peptidyl-prolyl cis-trans isomerase. This Staphylococcus saprophyticus subsp. saprophyticus (strain ATCC 15305 / DSM 20229 / NCIMB 8711 / NCTC 7292 / S-41) protein is Trigger factor.